Reading from the N-terminus, the 833-residue chain is Leucine--tRNA ligase (833 aa).

The 'HIGH' region motif lies at 41–52 (PYPSGAGLHVGH). A 'KMSKS' region motif is present at residues 610–614 (KMSKS). K613 provides a ligand contact to ATP.

This sequence belongs to the class-I aminoacyl-tRNA synthetase family.

It is found in the cytoplasm. The enzyme catalyses tRNA(Leu) + L-leucine + ATP = L-leucyl-tRNA(Leu) + AMP + diphosphate. This Streptococcus gordonii (strain Challis / ATCC 35105 / BCRC 15272 / CH1 / DL1 / V288) protein is Leucine--tRNA ligase.